Here is a 296-residue protein sequence, read N- to C-terminus: ATP synthase gamma chain (296 aa).

The protein belongs to the ATPase gamma chain family. In terms of assembly, F-type ATPases have 2 components, CF(1) - the catalytic core - and CF(0) - the membrane proton channel. CF(1) has five subunits: alpha(3), beta(3), gamma(1), delta(1), epsilon(1). CF(0) has three main subunits: a, b and c.

The protein localises to the cell membrane. In terms of biological role, produces ATP from ADP in the presence of a proton gradient across the membrane. The gamma chain is believed to be important in regulating ATPase activity and the flow of protons through the CF(0) complex. This Pseudarthrobacter chlorophenolicus (strain ATCC 700700 / DSM 12829 / CIP 107037 / JCM 12360 / KCTC 9906 / NCIMB 13794 / A6) (Arthrobacter chlorophenolicus) protein is ATP synthase gamma chain.